A 130-amino-acid chain; its full sequence is Small ribosomal subunit protein uS9 (130 aa).

Belongs to the universal ribosomal protein uS9 family.

The sequence is that of Small ribosomal subunit protein uS9 from Hamiltonella defensa subsp. Acyrthosiphon pisum (strain 5AT).